We begin with the raw amino-acid sequence, 3295 residues long: MNKNLYRIVFNQARGMLMVVADIAASGRAASSPSSGVGHTQRRRVSALSPLSFRLLIALGCISLSAQAAIVADGSAPGNQQPTIISSANGTPQVNIQTPSSGGVSRNAYRQFDVDNRGVILNNGRGVNQTQIAGLVDGNPWLARGEASVILNEVNSRDPSQLNGYIEVAGRKAQVVIANPAGITCEGCGFINANRATLTTGQAQLNNGQLTGYDVERGEIVIQGKGLDSRGQDHTDLIARSVKVNAGIWANELNITTGRNQVDAAHQNINTNAADGRHRPAVAVDVANLGGMYAGKIRLIGTETGVGVHNAGEIGASAGDIVITADGMLVNRGQISSAQQLAVNTPSGIENSGVLYGKGNTQLTTAGKLSNSGTVAAAGDTLIRAAEVNSSRNSVLGAGIKSDNSAITRGTLDIKARGQLTAQGKNISGTAQTFNANRIDLSGSQTQSGDLTFTTEGGDIDLTGANLFANRRLSVSTPSLLRTDKANLFAEQIALDAQALANVGGVITQTGLTDFNLNLPGDIDNRDGTLLTRGNFLLQAEHLTSNSQSLLGAGIQSDGKLAPRGDLNVTTRHALIAQGKTLTAGTLALSGSRLDLTDSLTQAKYMRLTATEGDIALTGATVMAANTLFADTRQILRSDKAYLTADQINLTAYSLSNVEGRVVQKGSGDFRLDLPGYLDNRGGVLLTKGNLALQAERLTSNSQSLLGAGIQADGSKASKGDLQANTTQALIAQGQNVAAGTMTLSGSRVDLTGSQTHASNITITARDGDVTTREATLITPGTLSMTAVANPEQTLNNRGGKLHADNIQLNLAKLENSNGEIAAATDLWLRLQSDFIHQAGARLTAGRDLLFNSRGALINQYKLEAGRDMQLTALSIRNTSADRNTNADNSSLLAGRGLSLSTDSLFNRGAIYTTGVGQFTVNGNTENIGEIYTEQQLTFTATGNLANRGVMQTRGEMQLSAQGDVNNSGMLYSAGDQMRLSIAGNLTNEGKLHVANGEMRLLTEGNLDNRGSLYGAGNSDITTQGNAVNTGSVYTQGALQWLTKGSVRNSASIAALGDLQLRANDLLSDNQSLMAAGLKADGSRSDSGNLAVSTEQALIAQGQNIAAGSLALAGSQIDLTGSQTQANAISLTAKSGDITLTSAVIKAATQLLVTQLAATRSSFIPPSSIPPSSTQSSSTQASASPSAWLRTDKASLIADQLTFDVQALSNLGGVIAQTGATDFNLNLPGYLDNRGGTILSKGNVAIQAQGLDSDSGSLLGAGVQSDGKLTNAGDLAVTVRQDLIAHGQSLAAGAMTLTGSGVDLTGSQTQARGITITANKGDVSTQRANILSLGSLAINAGANAGQTLNNQGGSLQANNIALNLGQLDNRTGKIAASQDLVLGLQSDFNILADSTLQAGRDFSFTTHGALTNDGQLLAGRKLSTRSNSLLNNGNIRAVQADLRASGALTNRGEILTRGGLSTDANTLFNSGTLIGATATLNARERITNSGPNALIGATDKNGTLALLAPVIENSDTVTRTDTAPTTTLLGMGKVILAGGQDNSGNYSSAAQVLNLSGLIESGNDLLVYAKTLTNRRQILTATTDFIVGDTETGAAYWTAENPDIPGGRYTQPPAGGPMNSDYIGTNYTSTVAYNRIDQISPEAQLLAGGNLTLQVGTLENNWSKVSAQGVIDLTGVTLQQDDWGSQQRLVEQTTSSGEYRYRTYKGKLWGIAWGPEMKLRLNNQYASSITAKTLTGSGTVINNTVINNGAAPGAIVAPRDRDSTGKNIAVEFNGIALTLPRSGLYQLKTDKGDYAPGPEAALSLANISPPSSLDATGPRGVPPPSDDLNRTGLVTPDRAVSGGYLVETHPAFASLNNWKGSDLYLQQLSSDPSVIHKRLGDNAYEQRLLRDQVLALTGRTVASDYRSEQAQFEQLFAAGVQYSKAFNLAPGTRLSAEQMATLTGNIVLMENRDVAGQTVLVPVVYLAGVKPGDLRANGALIAAENISLTEVQGFANAGAISASNNLQISMAKDITLNNRCGLLQAGNHLQLSTLNSDIDLTSARLNATNLQLDSGRDVILRTASDQYSSGNGAVQRTQTILGPLASLNISNNAVITAQRDFIQQGAGINIGKDLQVNTGGDWLLSTVQRSDQISAQYGGGSATSGSLRHLGSEVKVGGALSANVDNLTAVGARVNAGTIDVRAQNITLSAATDSLSVTGGSSSKRHTSSVNLYDETLLGSQLNATGDINLQTVNDITLSASAVQTDGALKLAAGGDVTLTSQTEQHDEQRNHTGTKKGLLSSTTTRSEEGRSQTLAVGSMLSAGSIDVSSQNIAVAGSSVVADKDIRLRAQENLTVSTAQQSESGSQLFEQKKSGLMSTGGIGVFIGTSRQKTTDQTQTVSHVGSTVGSLTGNVRLEAGNQLTLHGSDVVAGKDLALTGADVAISAAENSRSQQYTAESKQRGLTVALSGPVGSAVNTAVTTAKAAREENTGRLAGLQGVKAALSGVQAVQAGQLVQAQGGGITEMVGVSVSLGSQKSSSQQQQEQTQVSGSALTAGNNLSIKASGSDILIAGSQLKAGGDTRLDAARDVQLLGAANRQKTDGSNSSRGGSVGVSVGGSGLSVFANANKGQGNERGDGTFWTETTVDSGGMFSLRSGRDTALTGAQVSAETVKADVGRNLTLQSQQDRDNYDAKQSRASGGISVPVAGGGAAVNLSMSRDRLSSQYDSVQAQTGIFAGSGGVDIRVGEHTQLDGAVIASTAAADKNTLDTGTLGFSDIKNKAVFTVEHQGGSLSTGGPVGSDLLSNLGGMVLAGLGNGGYAEGTTQAAVSEGTITVRDTENQQQNVDDLSRDTGNANGSIGPIFDKEKEQNRLKEVQLIGEIGGQALDIASTQGKIIATHAANDKMKAVKPEDIAAAEKQWEKAHPGKAATAEDINQQIYQTAYNQAFNESGFGTGGPVQRGMQAATAAVQGLAGGNMGAALTGASAPYLAGVIKQSTGDNPAANTMAHAVLGAVTAYASGNNALAGAAGAATAELMAPTIISALGWDKNTLTEGQKQAVSALSTLAAGLAGGLTGDSTADALAGGQAGKNAVENNLLGGNEFTHTQFVQKHGADVLSCADNPSNAACQRGIAENKAYIAALATGSVALLPGSSQAMWALGAGTNAGMQYADNGKINPVNSVAAGWINVITMGQGWKGTIAWNAAGGALINAINGGDPLTGAITNGTGAGFGYGVGNYVVKPAANTLGKWITGGWNPKFDPNLLKYAEVKGQLGISKEMLPSKIPSAVGNAGGSLSSEFGSSLIQQKKDAMEDSK.

Positions 33–366 (PSSGVGHTQR…GKGNTQLTTA (334 aa)) are two-partner system transport domain (TPS). The helical transmembrane segment at 55–75 (LLIALGCISLSAQAAIVADGS) threads the bilayer. Positions 353 to 1574 (GVLYGKGNTQ…LLVYAKTLTN (1222 aa)) are FHA-1. Residues 1165–1185 (PPSSIPPSSTQSSSTQASASP) are disordered. Positions 1575–1796 (RRQILTATTD…LKTDKGDYAP (222 aa)) are receptor binding domain (RBD). Residues 1797–1977 (GPEAALSLAN…GVKPGDLRAN (181 aa)) are YP domain. The disordered stretch occupies residues 1806 to 1831 (NISPPSSLDATGPRGVPPPSDDLNRT). A periplasmic FHA-1 repeat (pFR) region spans residues 1998–2035 (GAISASNNLQISMAKDITLNNRCGLLQAGNHLQLSTLN). An FHA-2 region spans residues 2022–2676 (LLQAGNHLQL…DRDNYDAKQS (655 aa)). Disordered stretches follow at residues 2260 to 2292 (TSQT…EGRS) and 2823 to 2847 (QQNV…FDKE). Residues 2823–2838 (QQNVDDLSRDTGNANG) are compositionally biased toward polar residues. The VENN CT cleavage motif motif lies at 3073 to 3076 (VENN). The segment at 3073–3295 (VENNLLGGNE…QKKDAMEDSK (223 aa)) is CT domain. The segment at 3276–3295 (SSEFGSSLIQQKKDAMEDSK) is disordered. The segment covering 3286-3295 (QKKDAMEDSK) has biased composition (basic and acidic residues).

It in the N-terminal section; belongs to the CdiA toxin family. As to quaternary structure, probably interacts with cognate immunity protein CdiI.

The protein localises to the membrane. It is found in the target cell. Its subcellular location is the target cell cytoplasm. Functionally, toxic component of a toxin-immunity protein module, which functions as a cellular contact-dependent growth inhibition (CDI) system. CDI modules allow bacteria to communicate with and inhibit the growth of closely related neighboring bacteria in a contact-dependent fashion. CDI is neutralized by its cognate immunity protein CdiI, but not by non-cognate CdiI from other bacteria. In terms of biological role, the CdiA protein is thought to be exported from the cell through the central lumen of CdiB, the other half of its two-partner system (TPS). The TPS domain probably remains associated with CdiB while the FHA-1 domain forms an extended filament with the receptor-binding domain (RBD) at its extremity; in the secretion arrested state the C-terminus of the RBD and YP domains form a hairpin-like structure as the FHA-2, PT and CT domains are periplasmic. The YP domain is probably responsible for this arrest at the point where it re-enters the host cell periplasm. Upon binding to a target cell outer membrane receptor a signal is transmitted to activate secretion. The filament elongates slightly, the rest of CdiA is secreted and the FHA-2 domain becomes stably associated with the target cell's outer membrane where it facilitates entry of the toxic CT domain into the target cell periplasm. From there the toxic CT domain is cleaved and gains access to the target cell cytoplasm via an inner membrane protein. In Yersinia pestis, this protein is Toxin CdiA.